Consider the following 579-residue polypeptide: Leucine-rich repeat-containing protein 15 (579 aa).

The first 21 residues, 1–21 (MPLKHYLLLLVSCQAWAAGLA), serve as a signal peptide directing secretion. An LRRNT domain is found at 22–53 (YYGCPSECTCSRASQVECTGAQIVAMPSPLPW). Residues 22–536 (YYGCPSECTC…TWGMTDAQSG (515 aa)) lie on the Extracellular side of the membrane. 15 LRR repeats span residues 54 to 75 (NAMSLQILNTHITELPEDKFLN), 78 to 99 (ALIALKMEKNELANIMPGAFRN), 102 to 123 (SLRHLSLANNKLKNLPVRLFQD), 126 to 147 (NLETLLLSNNQLVQIQPAQFSQ), 150 to 171 (NLKELQLYGNNLEYIPEGVFDH), 174 to 195 (GLTKLNLGNNGFTHLSPRVFQH), 198 to 219 (NLQVLRLYENRLSDIPMGTFDA), 222 to 243 (NLQELALQENQIGTLSPGLFHN), 246 to 267 (NLQRLYLSNNHISHLPPGIFMQ), 270 to 291 (HLNKLTLFGNSLKELSPGVFGP), 294 to 315 (NLRELWLYNNHITSLPDNAFSH), 318 to 339 (QLQVLILSHNQLSYISPGAFNG), 342 to 363 (NLRELSLHTNALQDLDGNVFRS), 366 to 387 (NLRNVSLQNNRLRQLPGSIFAN), and 390 to 411 (GLMTIQLQNNNLENLPLGIFDH). N-linked (GlcNAc...) asparagine glycosylation occurs at Asn75. An N-linked (GlcNAc...) asparagine glycan is attached at Asn369. In terms of domain architecture, LRRCT spans 423–473 (NPWRCDSNILPLHDWLILNRARLGTDTLPVCSSPASVRGQSLVIINVNFPG). Residues 476 to 509 (VQGPETPEVSSYPDTSSYPDSTSISSTTEITRST) form a disordered region. A compositionally biased stretch (low complexity) spans 485 to 506 (SSYPDTSSYPDSTSISSTTEIT). The chain crosses the membrane as a helical span at residues 537–557 (LAIAAIVIGIIALACSLAACI). Residues 558-579 (CCCCCKKRSQAVLMQMKAPNEC) lie on the Cytoplasmic side of the membrane.

In terms of tissue distribution, expressed in chodrocytes (at protein level).

The protein localises to the cell membrane. The chain is Leucine-rich repeat-containing protein 15 (Lrrc15) from Mus musculus (Mouse).